The chain runs to 205 residues: Small ribosomal subunit protein uS4 (205 aa).

Over residues 1 to 16 the composition is skewed to basic and acidic residues; that stretch reads MSKRESSKYKIDRRMG. Positions 1–46 are disordered; that stretch reads MSKRESSKYKIDRRMGENIWGRPKSPVNRREYGPGQHGQRRKGKLS. One can recognise an S4 RNA-binding domain in the interval 94–157; that stretch reads SRLDAIVYRA…KQLVIVLESV (64 aa).

Belongs to the universal ribosomal protein uS4 family. Part of the 30S ribosomal subunit. Contacts protein S5. The interaction surface between S4 and S5 is involved in control of translational fidelity.

One of the primary rRNA binding proteins, it binds directly to 16S rRNA where it nucleates assembly of the body of the 30S subunit. Its function is as follows. With S5 and S12 plays an important role in translational accuracy. The sequence is that of Small ribosomal subunit protein uS4 from Rhizobium rhizogenes (strain K84 / ATCC BAA-868) (Agrobacterium radiobacter).